Here is a 402-residue protein sequence, read N- to C-terminus: Large ribosomal subunit protein uL3 (402 aa).

The segment at 1 to 35 (MSHRKFSAPRHGSMGFTPKKRSKRHRGKVKAFPKD) is disordered. Positions 18 to 31 (PKKRSKRHRGKVKA) are enriched in basic residues.

It belongs to the universal ribosomal protein uL3 family.

The protein localises to the cytoplasm. Its function is as follows. The L3 protein is a component of the large subunit of cytoplasmic ribosomes. The chain is Large ribosomal subunit protein uL3 (RPL3) from Toxocara canis (Canine roundworm).